The primary structure comprises 708 residues: MEANHQRNDLGLVALTMLAQYHNISLNPEEIKHKFDLDGKGLSLTAWLLAAKSLALKAKHIKKEISRLHLVNLPALVWQDNGKHFLLVKVDTDNNRYLTYNLEQDAPQILSQDEFEACYQGQLILVTSRASVVGQLAKFDFTWFIPAVIKYRKIFLETLIVSIFLQIFALITPLFFQVVMDKVLVHRGFSTLNIITVALAIVIIFEIVLSGLRTYVFSHSTSRIDVELGAKLFRHLLSLPISYFENRRVGDTVARVRELDQIRNFLTGQALTSVLDLLFSFIFFAVMWYYSPKLTLVILGSLPCYILWSIFISPILRRRLDEKFARSADNQAFLVESVTSINMIKAMAVAPQMTDTWDKQLASYVSSSFRVTVLATIGQQGVQLIQKTVMVINLWLGAHLVISGDLSIGQLIAFNMLSGQVIAPVIRLAQLWQDFQQVGISVTRLGDVLNSPTEQYQGKLSLPEIKGDISFKNIRFRYKPDAPTILNNVNLEIRQGEVIGIVGRSGSGKSTLTKLLQRFYIPENGQVLIDGHDLALADPNWLRRQIGVVLQDNVLLNRSIRENIALSDPGMPMERVIYAAKLAGAHDFISELREGYNTIVGEQGAGLSGGQRQRIAIARALVNNPKILIFDEATSALDYESEHIIMQNMQKICQGRTVILIAHRLSTVKNADRIIVMEKGEIVEQGKHHELLQNSNGLYSYLHQLQLN.

The Peptidase C39 domain occupies 1-126 (MEANHQRNDL…ACYQGQLILV (126 aa)). One can recognise an ABC transmembrane type-1 domain in the interval 155 to 437 (FLETLIVSIF…LAQLWQDFQQ (283 aa)). 5 helical membrane-spanning segments follow: residues 159-179 (LIVS…FQVV), 192-212 (LNII…LSGL), 270-290 (ALTS…MWYY), 296-316 (LVIL…SPIL), and 389-409 (VMVI…LSIG). The ABC transporter domain maps to 469 to 704 (ISFKNIRFRY…SNGLYSYLHQ (236 aa)). 503 to 510 (GRSGSGKS) is an ATP binding site.

Belongs to the ABC transporter superfamily. Protein-1 exporter (TC 3.A.1.109) family. Homodimer.

Its subcellular location is the cell inner membrane. It carries out the reaction ATP + H2O + proteinSide 1 = ADP + phosphate + proteinSide 2.. Functionally, part of the ABC transporter complex LktBD involved in leukotoxin export. Transmembrane domains (TMD) form a pore in the inner membrane and the ATP-binding domain (NBD) is responsible for energy generation. This is Leukotoxin translocation ATP-binding protein LktB (lktB) from Mannheimia haemolytica (Pasteurella haemolytica).